A 308-amino-acid polypeptide reads, in one-letter code: D-alanine--D-alanine ligase (308 aa).

An ATP-grasp domain is found at 104 to 301 (KQIWQGSDLP…FDELCVAILE (198 aa)). 130 to 185 (IAELGLPVIIKPVHEGSSVGMSKVEKAEDFAAAIEKATQHDAVVMAEKWITGREFT) lines the ATP pocket. The Mg(2+) site is built by Asp-255, Glu-268, and Asn-270.

This sequence belongs to the D-alanine--D-alanine ligase family. Requires Mg(2+) as cofactor. It depends on Mn(2+) as a cofactor.

It localises to the cytoplasm. The enzyme catalyses 2 D-alanine + ATP = D-alanyl-D-alanine + ADP + phosphate + H(+). Its pathway is cell wall biogenesis; peptidoglycan biosynthesis. In terms of biological role, cell wall formation. This is D-alanine--D-alanine ligase from Acinetobacter baumannii (strain ACICU).